Reading from the N-terminus, the 207-residue chain is Ribosome maturation factor RimM (207 aa).

The PRC barrel domain maps to 114–207; that stretch reads DDEYYWVDLI…RIDSDWPLDY (94 aa).

This sequence belongs to the RimM family. In terms of assembly, binds ribosomal protein uS19.

It localises to the cytoplasm. Functionally, an accessory protein needed during the final step in the assembly of 30S ribosomal subunit, possibly for assembly of the head region. Essential for efficient processing of 16S rRNA. May be needed both before and after RbfA during the maturation of 16S rRNA. It has affinity for free ribosomal 30S subunits but not for 70S ribosomes. This is Ribosome maturation factor RimM from Bordetella pertussis (strain Tohama I / ATCC BAA-589 / NCTC 13251).